Consider the following 135-residue polypeptide: S-protein homolog 29 (135 aa).

The signal sequence occupies residues 1–24 (MKNSSKIFVVLSIILFYVISSCHG). Asn110 carries N-linked (GlcNAc...) asparagine glycosylation.

The protein belongs to the plant self-incompatibility (S1) protein family.

The protein resides in the secreted. In Arabidopsis thaliana (Mouse-ear cress), this protein is S-protein homolog 29.